The sequence spans 154 residues: Myoglobin (154 aa).

A Globin domain is found at 2 to 148 (GLSDGEWQLV…FRNDIAAKYK (147 aa)). Ser4 carries the phosphoserine modification. His65 provides a ligand contact to nitrite. His65 is an O2 binding site. Thr68 carries the post-translational modification Phosphothreonine. His94 lines the heme b pocket.

It belongs to the globin family. As to quaternary structure, monomeric.

Its subcellular location is the cytoplasm. The protein resides in the sarcoplasm. It carries out the reaction Fe(III)-heme b-[protein] + nitric oxide + H2O = Fe(II)-heme b-[protein] + nitrite + 2 H(+). The enzyme catalyses H2O2 + AH2 = A + 2 H2O. Monomeric heme protein which primary function is to store oxygen and facilitate its diffusion within muscle tissues. Reversibly binds oxygen through a pentacoordinated heme iron and enables its timely and efficient release as needed during periods of heightened demand. Depending on the oxidative conditions of tissues and cells, and in addition to its ability to bind oxygen, it also has a nitrite reductase activity whereby it regulates the production of bioactive nitric oxide. Under stress conditions, like hypoxia and anoxia, it also protects cells against reactive oxygen species thanks to its pseudoperoxidase activity. The sequence is that of Myoglobin (MB) from Ondatra zibethicus (Muskrat).